Consider the following 303-residue polypeptide: Pycsar effector protein XpPycTIR (303 aa).

14 to 138 (LVATLTEHRL…RRIAATLARR (125 aa)) lines the a nucleoside 3',5'-cyclic phosphate pocket. Positions 154–273 (RVFIMSSVEA…DLAGLTTIPY (120 aa)) are TIR-like.

It is found in the cytoplasm. The catalysed reaction is NAD(+) + H2O = ADP-D-ribose + nicotinamide + H(+). In terms of biological role, pycsar (pyrimidine cyclase system for antiphage resistance) provides immunity against bacteriophage. The pyrimidine cyclase (PycC) synthesizes cyclic nucleotides in response to infection; these serve as specific second messenger signals. The signals activate the adjacent effector, leading to bacterial cell death and abortive phage infection. A clade B Pycsar system. The effector gene of a two-gene Pycsar system. Expression of this and adjacent uridylate cyclase XpPycC (AC P0DV28) confers resistance to bacteriophage T7. When cells expressing the Pycsar system are infected by phage T7 at low multiplicity of infection (0.2 MOI) the culture survivey, at 2.0 MOI bacteria enter growth arrest. The same cells enter growth arrest after exposure to 2.5 mM cUMP but not cCMP; the effector protein responds only to the cUMP usually produced by its cognate NTP cyclase. NAD(+) levels in infected cells are depleted between 5 and 10 minutes after infection with T7 at MOI of 2. Probably only responds to cUMP. This is Pycsar effector protein XpPycTIR from Xanthomonas perforans.